A 147-amino-acid chain; its full sequence is Hemoglobin subunit beta (147 aa).

N-acetylvaline is present on valine 2. The 145-residue stretch at histidine 3 to histidine 147 folds into the Globin domain. Threonine 13 carries the phosphothreonine modification. Serine 45 carries the phosphoserine modification. Lysine 60 is subject to N6-acetyllysine. Histidine 64 lines the heme b pocket. An N6-acetyllysine modification is found at lysine 83. Histidine 93 contacts heme b. S-nitrosocysteine is present on cysteine 94. Position 145 is an N6-acetyllysine (lysine 145).

Belongs to the globin family. In terms of assembly, heterotetramer of two alpha chains and two beta chains in adult hemoglobin A (HbA). In terms of tissue distribution, red blood cells.

Functionally, involved in oxygen transport from the lung to the various peripheral tissues. The polypeptide is Hemoglobin subunit beta (HBB) (Pan paniscus (Pygmy chimpanzee)).